We begin with the raw amino-acid sequence, 218 residues long: Ribosome maturation factor RimM (218 aa).

The 74-residue stretch at Gly-141–Leu-214 folds into the PRC barrel domain.

It belongs to the RimM family. In terms of assembly, binds ribosomal protein uS19.

It is found in the cytoplasm. In terms of biological role, an accessory protein needed during the final step in the assembly of 30S ribosomal subunit, possibly for assembly of the head region. Essential for efficient processing of 16S rRNA. May be needed both before and after RbfA during the maturation of 16S rRNA. It has affinity for free ribosomal 30S subunits but not for 70S ribosomes. This Parafrankia sp. (strain EAN1pec) protein is Ribosome maturation factor RimM.